The primary structure comprises 819 residues: Hypoxia-inducible factor 1-alpha (819 aa).

Residues 1–31 are disordered; the sequence is MEGAAGGEEKKNRMSSERRKEKSRDAARSRR. Residues 1 to 402 are interaction with TSGA10; it reads MEGAAGGEEK…KEPDALTLLA (402 aa). Positions 7–31 are enriched in basic and acidic residues; sequence GEEKKNRMSSERRKEKSRDAARSRR. Residues 18 to 71 enclose the bHLH domain; sequence RRKEKSRDAARSRRSKESEVFYELAHQLPLPHNVSSHLDKASVMRLTISYLRVR. Residues 22–31 form a DNA-binding region; that stretch reads KSRDAARSRR. Residues 86-159 enclose the PAS 1 domain; it reads KAQMNCFYLK…THRNGPIKKG (74 aa). The required for heterodimer formation with ARNT stretch occupies residues 171 to 192; that stretch reads RMKCTLTSRGRTMNIKSATWKV. Residues 229–299 enclose the PAS 2 domain; it reads PHPSNIEIPL…KTHHDMFTKG (71 aa). The residue at position 248 (serine 248) is a Phosphoserine; by CK1. Positions 303–346 constitute a PAC domain; sequence TGQYRMLAKRGGYVWVETQATVIYNTKNSQPQCIVCVNYVVSGI. An ODD region spans residues 402-599; sequence APAAGDTIIS…NPPSVSTAFQ (198 aa). Position 403 is a 4-hydroxyproline (proline 403). A compositionally biased stretch (polar residues) spans 495-518; the sequence is IQDQPASPSDGSTRQSSPEPNSPS. Residues 495–521 form a disordered region; it reads IQDQPASPSDGSTRQSSPEPNSPSEYC. The segment at 532-576 is NTAD; it reads FKLELVEKLFAEDTEAKNPFSTQDTDLDLEMLAPYIPMDDDFQLR. The residue at position 533 (lysine 533) is an N6-acetyllysine; alternate. A Glycyl lysine isopeptide (Lys-Gly) (interchain with G-Cter in ubiquitin); alternate cross-link involves residue lysine 533. Glycyl lysine isopeptide (Lys-Gly) (interchain with G-Cter in ubiquitin) cross-links involve residues lysine 539 and lysine 548. Serine 552 is subject to Phosphoserine; by GSK3-beta. Threonine 556 is modified (phosphothreonine; by GSK3-beta). Position 565 is a 4-hydroxyproline (proline 565). Serine 577 carries the post-translational modification Phosphoserine; by PLK3. Residues 577-778 form an ID region; it reads SFDQLSPLES…SDLACRLLGQ (202 aa). The disordered stretch occupies residues 581-685; sequence LSPLESSSPN…SHPRSPNVLS (105 aa). A compositionally biased stretch (low complexity) spans 582–613; sequence SPLESSSPNPPSVSTAFQQTQLQEPTITTTTT. The segment covering 614 to 628 has biased composition (basic and acidic residues); it reads EELKTVTKDSTEDIK. Over residues 632 to 655 the composition is skewed to low complexity; the sequence is TSPSSTHTPKETTTATTSSPYSGT. A Phosphoserine; by PLK3 modification is found at serine 650. Lysine 702 carries the N6-acetyllysine modification. A Nuclear localization signal motif is present at residues 711–717; it reads RKRKMEH. The segment at 779–819 is CTAD; sequence SMDGSGLPQLTSYDCEVNAPIQGSRNLLQGEELLRALDQVN. Cysteine 793 is modified (S-nitrosocysteine). A (3S)-3-hydroxyasparagine modification is found at asparagine 796.

In terms of assembly, interacts with the ARNT; forms a heterodimer that binds core DNA sequence 5'-TACGTG-3' within the hypoxia response element (HRE) of target gene promoters. Interacts with COPS5; the interaction increases the transcriptional activity of HIF1A through increased stability. Interacts with EP300 (via TAZ-type 1 domains); the interaction is stimulated in response to hypoxia and inhibited by CITED2. Interacts with CREBBP (via TAZ-type 1 domains). Interacts with NCOA1, NCOA2, APEX1 and HSP90. Interacts (hydroxylated within the ODD domain) with VHLL (via beta domain); the interaction, leads to polyubiquitination and subsequent HIF1A proteasomal degradation. During hypoxia, sumoylated HIF1A also binds VHL; the interaction promotes the ubiquitination of HIF1A. Interacts with SENP1; the interaction desumoylates HIF1A resulting in stabilization and activation of transcription. Interacts (via the ODD domain) with NAA10; the interaction appears not to acetylate HIF1A nor have any affect on protein stability, during hypoxia. Interacts with RWDD3; the interaction enhances HIF1A sumoylation. Interacts with TSGA10. Interacts with HIF3A. Interacts with RORA (via the DNA binding domain); the interaction enhances HIF1A transcription under hypoxia through increasing protein stability. Interaction with PSMA7 inhibits the transactivation activity of HIF1A under both normoxic and hypoxia-mimicking conditions. Interacts with USP20. Interacts with RACK1; promotes HIF1A ubiquitination and proteasome-mediated degradation. Interacts (via N-terminus) with USP19. Interacts with SIRT2. Interacts (deacetylated form) with EGLN1. Interacts with CBFA2T3. Interacts with HSP90AA1 and HSP90AB1. Interacts with DCUN1D1; this interaction increases the interaction between VHL and DCUN1D1. Interacts with HIF1AN. S-nitrosylation of Cys-793 may be responsible for increased recruitment of p300 coactivator necessary for transcriptional activity of HIF-1 complex. In terms of processing, acetylation of Lys-533 by ARD1 increases interaction with VHL and stimulates subsequent proteasomal degradation. Deacetylation of Lys-702 by SIRT2 increases its interaction with and hydroxylation by EGLN1 thereby inactivating HIF1A activity by inducing its proteasomal degradation. Post-translationally, requires phosphorylation for DNA-binding. Phosphorylation at Ser-248 by CSNK1D/CK1 represses kinase activity and impairs ARNT binding. Phosphorylation by GSK3-beta and PLK3 promote degradation by the proteasome. The iron and 2-oxoglutarate dependent 3-hydroxylation of asparagine is (S) stereospecific within HIF CTAD domains. In terms of processing, sumoylated; with SUMO1 under hypoxia. Sumoylation is enhanced through interaction with RWDD3. Both sumoylation and desumoylation seem to be involved in the regulation of its stability during hypoxia. Sumoylation can promote either its stabilization or its VHL-dependent degradation by promoting hydroxyproline-independent HIF1A-VHL complex binding, thus leading to HIF1A ubiquitination and proteasomal degradation. Desumoylation by SENP1 increases its stability amd transcriptional activity. There is a disaccord between various publications on the effect of sumoylation and desumoylation on its stability and transcriptional activity. Post-translationally, in normoxia, is hydroxylated on Pro-403 and Pro-565 in the oxygen-dependent degradation domain (ODD) by EGLN1/PHD2 and EGLN2/PHD1. EGLN3/PHD3 has also been shown to hydroxylate Pro-565. The hydroxylated prolines promote interaction with VHL, initiating rapid ubiquitination and subsequent proteasomal degradation. Deubiquitinated by USP20. Under hypoxia, proline hydroxylation is impaired and ubiquitination is attenuated, resulting in stabilization. In normoxia, is hydroxylated on Asn-796 by HIF1AN, thus abrogating interaction with CREBBP and EP300 and preventing transcriptional activation. Repressed by iron ion, via Fe(2+) prolyl hydroxylase (PHD) enzymes-mediated hydroxylation and subsequent proteasomal degradation.

Its subcellular location is the cytoplasm. It is found in the nucleus. The protein resides in the nucleus speckle. Induced by reactive oxygen species (ROS). Its function is as follows. Functions as a master transcriptional regulator of the adaptive response to hypoxia. Under hypoxic conditions, activates the transcription of over 40 genes, including erythropoietin, glucose transporters, glycolytic enzymes, vascular endothelial growth factor, HILPDA, and other genes whose protein products increase oxygen delivery or facilitate metabolic adaptation to hypoxia. Plays an essential role in embryonic vascularization, tumor angiogenesis and pathophysiology of ischemic disease. Heterodimerizes with ARNT; heterodimer binds to core DNA sequence 5'-TACGTG-3' within the hypoxia response element (HRE) of target gene promoters. Activation requires recruitment of transcriptional coactivators such as CREBBP and EP300. Activity is enhanced by interaction with NCOA1 and/or NCOA2. Interaction with redox regulatory protein APEX1 seems to activate CTAD and potentiates activation by NCOA1 and CREBBP. Involved in the axonal distribution and transport of mitochondria in neurons during hypoxia. The protein is Hypoxia-inducible factor 1-alpha (HIF1A) of Eospalax fontanierii baileyi (Plateau zokor).